Reading from the N-terminus, the 85-residue chain is Beta-insect depressant toxin LqhIT2 (85 aa).

Residues 1 to 21 (MKLLLLLIVSASMLIESLVNA) form the signal peptide. An LCN-type CS-alpha/beta domain is found at 22-82 (DGYIKRRDGC…TWKSETNTCG (61 aa)). 4 disulfides stabilise this stretch: Cys-31–Cys-81, Cys-35–Cys-56, Cys-42–Cys-63, and Cys-46–Cys-65. Position 82 is a glycine amide (Gly-82).

The protein belongs to the long (4 C-C) scorpion toxin superfamily. Sodium channel inhibitor family. Beta subfamily. In terms of tissue distribution, expressed by the venom gland.

The protein localises to the secreted. Its function is as follows. Depressant insect beta-toxins cause a transient contraction paralysis followed by a slow flaccid paralysis. They bind voltage-independently at site-4 of sodium channels (Nav) and shift the voltage of activation toward more negative potentials thereby affecting sodium channel activation and promoting spontaneous and repetitive firing. This toxin is active only on insects. This Leiurus hebraeus (Hebrew deathstalker scorpion) protein is Beta-insect depressant toxin LqhIT2.